The primary structure comprises 596 residues: Arginine--tRNA ligase (596 aa).

The short motif at 135–145 (ANPTGPIHIGG) is the 'HIGH' region element. Positions 227–249 (PRVDGGADQDGNPLGEGDSEQRE) are disordered.

This sequence belongs to the class-I aminoacyl-tRNA synthetase family. As to quaternary structure, monomer.

The protein resides in the cytoplasm. It catalyses the reaction tRNA(Arg) + L-arginine + ATP = L-arginyl-tRNA(Arg) + AMP + diphosphate. In Bifidobacterium adolescentis (strain ATCC 15703 / DSM 20083 / NCTC 11814 / E194a), this protein is Arginine--tRNA ligase.